A 197-amino-acid polypeptide reads, in one-letter code: Guanylate kinase (197 aa).

Ser-2 is subject to N-acetylserine. In terms of domain architecture, Guanylate kinase-like spans 4–186 (PRPVVLSGPS…AYAELKEALS (183 aa)). ATP is bound at residue 14–19 (GAGKST). 37 to 51 (SHTTRNPRPGEENGK) is a binding site for substrate. Active-site residues include Arg-44, Arg-137, and Arg-148. An ATP-binding site is contributed by Arg-137. 171 to 172 (ND) is a binding site for ATP.

It belongs to the guanylate kinase family. As to quaternary structure, monomer. Interacts with RD3. As to expression, widely expressed.

The protein localises to the photoreceptor inner segment. It localises to the cytoplasm. The protein resides in the cytosol. Its subcellular location is the mitochondrion. The catalysed reaction is GMP + ATP = GDP + ADP. Up-regulated by RD3. Its function is as follows. Catalyzes the phosphorylation of GMP to GDP. Essential enzyme for recycling GMP and indirectly, cyclic GMP (cGMP). Involved in the cGMP metabolism in photoreceptors. It may also have a role in the survival and growth progression of some tumors. In addition to its physiological role, GUK1 is essential for converting prodrugs used for the treatment of cancers and viral infections into their pharmacologically active metabolites, most notably acyclovir, ganciclovir, and 6-thioguanine and its closely related analog 6-mercaptopurine. The chain is Guanylate kinase from Homo sapiens (Human).